The following is a 345-amino-acid chain: 3'-5' exoribonuclease 1 (345 aa).

2 stretches are compositionally biased toward basic and acidic residues: residues 1–11 (MEDERGRERGG) and 19–46 (PRPE…ETDG). Residues 1–50 (MEDERGRERGGDAAQQKTPRPECEESRPLSVEKKQRCRLDGKETDGSKFI) form a disordered region. A phosphoserine mark is found at Ser55 and Ser58. An SAP domain is found at 72-106 (INRMSKEELRAKLSEFKLETRGVKDVLKKRLKNYY). The Exonuclease domain maps to 126–302 (ICIIDFEATC…DDSKNIARIA (177 aa)). Mg(2+) contacts are provided by Asp130 and Glu132. Glu132 functions as the Proton acceptor in the catalytic mechanism. AMP contacts are provided by Glu132 and Ala133. Asp230 serves as a coordination point for Mg(2+). Residue His289 is the Proton acceptor of the active site. His289 serves as a coordination point for AMP. Asp294 serves as a coordination point for Mg(2+).

As to quaternary structure, identified in a histone pre-mRNA complex, at least composed of ERI1, LSM11, SLBP, SNRPB, SYNCRIP and YBX1. Binds to 40S and 60S ribosomal subunits and to 80S assembled ribosomes. Interacts in a cooperative manner with SLBP to the mature 3'-end of histone mRNAs. Found in a ternary complex with SLBP and the stem-loop structure of the 3'-end of histone mRNAs. Requires Mg(2+) as cofactor. Widely expressed with high levels in spleen, thymus and testis (at protein level).

It localises to the cytoplasm. It is found in the nucleus. Its subcellular location is the nucleolus. It catalyses the reaction Exonucleolytic cleavage in the 3'- to 5'-direction to yield nucleoside 5'-phosphates.. With respect to regulation, although it can bind simultaneously with SLBP to the 3'-end of histone mRNA, the presence of SLBP prevents the exonuclease activity. In terms of biological role, RNA exonuclease that binds to the 3'-end of histone mRNAs and degrades them, suggesting that it plays an essential role in histone mRNA decay after replication. A 2' and 3'-hydroxyl groups at the last nucleotide of the histone 3'-end is required for efficient 3'-end histone mRNA exonuclease activity and degradation of RNA substrates. Also able to degrade the 3'-overhangs of short interfering RNAs (siRNAs) in vitro, suggesting a possible role as regulator of RNA interference (RNAi). Required for binding the 5'-ACCCA-3' sequence present in stem-loop structure. Able to bind other mRNAs. Required for 5.8S rRNA 3'-end processing. Also binds to 5.8s ribosomal RNA. Binds with high affinity to the stem-loop structure of replication-dependent histone pre-mRNAs. In vitro, does not have sequence specificity. In vitro, has weak DNA exonuclease activity. In vitro, shows biphasic kinetics such that there is rapid hydrolysis of the last three unpaired RNA nucleotides in the 39 flanking sequence followed by a much slower cleavage through the stem that occurs over a longer incubation period in the order of hours. ERI1-mediated RNA metabolism plays a key role in chondrogenesis. In Mus musculus (Mouse), this protein is 3'-5' exoribonuclease 1 (Eri1).